The primary structure comprises 470 residues: Maturase K (470 aa).

Belongs to the intron maturase 2 family. MatK subfamily.

The protein resides in the plastid. It localises to the chloroplast. Functionally, usually encoded in the trnK tRNA gene intron. Probably assists in splicing its own and other chloroplast group II introns. The protein is Maturase K of Nypa fruticans (Nypa palm).